A 677-amino-acid chain; its full sequence is Multicopper oxidase GIP1 (677 aa).

Residues 1-23 form the signal peptide; sequence MLTSPRLILLLLAWVFSALVASA. Plastocyanin-like domains follow at residues 31–150 and 179–379; these read ITWE…IRRK and LVMV…RYKG. Asn-76 carries N-linked (GlcNAc...) asparagine glycosylation. Residues His-80, His-82, His-130, and His-132 each coordinate Cu cation. Asn-228, Asn-283, Asn-396, and Asn-478 each carry an N-linked (GlcNAc...) asparagine glycan. The Plastocyanin-like 3 domain occupies 469–588; that stretch reads DEGLVIRTKN…AGGMAIAILD (120 aa). Residue His-503 participates in Cu cation binding. N-linked (GlcNAc...) asparagine glycosylation is present at Asn-520. Positions 629 to 651 are disordered; the sequence is PLLAVSPSGGPKKDSGETSASDS.

Belongs to the multicopper oxidase family. Might be part of an extracellular enzyme complex composed of GIP1, aurF, aurO and aurS.

It is found in the secreted. The protein resides in the extracellular space. It participates in pigment biosynthesis. In terms of biological role, multicopper oxidase; part of the gene cluster that mediates the biosynthesis of aurofusarin, a red mycelium pigment which is acting as a mycotoxin. The first step is performed by the polyketide synthase which condenses one acetyl-CoA and 6 malonyl-CoA units to form the first intermediate, the cyclic heptaketide and yellow pigment YWA1. The C2 hydroxyl group in the pyrone ring of YWA1 is probably formed during ring closure by an aldol-type cyclization reaction. The dehydratase aurZ then acts as the first tailoring enzyme in the aurofusarin biosynthetic pathway by converting YWA1 to nor-rubrofusarin. Nor-rubrofusarin is then methylated to rubrofusarin by the O-methyltransferase aurJ. Rubrofusarin is then transported across the plasma membrane by the rubrofusarin-specific pump aurT for further enzymatic processing by the extracellular complex composed of GIP1, aurF, aurO and aurS to yield aurofusarin. This is Multicopper oxidase GIP1 from Gibberella zeae (strain ATCC MYA-4620 / CBS 123657 / FGSC 9075 / NRRL 31084 / PH-1) (Wheat head blight fungus).